Here is a 362-residue protein sequence, read N- to C-terminus: Sulfoquinovose monooxygenase (362 aa).

This sequence belongs to the SsuD family.

The enzyme catalyses 6-sulfo-D-quinovose + FMNH2 + O2 = 6-dehydro-D-glucose + FMN + sulfite + H2O + 2 H(+). In terms of biological role, part of the alkanesulfonate monooxygenase (sulfo-ASMO) pathway, a D-sulfoquinovose degradation pathway that enables the complete utilization of all carbons within sulfoquinovose (SQ) with concomitant production of inorganic sulfite. Catalyzes the oxidative desulfurization of sulfoquinovose to sulfite and 6-dehydro-D-glucose. This Novosphingobium aromaticivorans (strain ATCC 700278 / DSM 12444 / CCUG 56034 / CIP 105152 / NBRC 16084 / F199) protein is Sulfoquinovose monooxygenase.